The sequence spans 237 residues: Uridylate kinase (237 aa).

12–15 (KLSG) is a binding site for ATP. The involved in allosteric activation by GTP stretch occupies residues 20 to 25 (GDEGFG). UMP is bound at residue Gly-54. The ATP site is built by Gly-55 and Arg-59. UMP is bound by residues Asp-74 and 135–142 (TGSPFFTT). ATP contacts are provided by Thr-162, Tyr-168, and Asp-171.

The protein belongs to the UMP kinase family. As to quaternary structure, homohexamer.

It localises to the cytoplasm. The enzyme catalyses UMP + ATP = UDP + ADP. It participates in pyrimidine metabolism; CTP biosynthesis via de novo pathway; UDP from UMP (UMPK route): step 1/1. Allosterically activated by GTP. Inhibited by UTP. Catalyzes the reversible phosphorylation of UMP to UDP. This is Uridylate kinase from Mannheimia succiniciproducens (strain KCTC 0769BP / MBEL55E).